The sequence spans 300 residues: Protein N-terminal and lysine N-methyltransferase EFM7 (300 aa).

S-adenosyl-L-methionine is bound by residues tryptophan 75, 101-103 (GAG), aspartate 123, tryptophan 156, and serine 179.

This sequence belongs to the class I-like SAM-binding methyltransferase superfamily. EFM7 family.

Its subcellular location is the cytoplasm. Functionally, S-adenosyl-L-methionine-dependent protein methyltransferase that trimethylates the N-terminal glycine 'Gly-2' of elongation factor 1-alpha, before also catalyzing the mono- and dimethylation of 'Lys-3'. The protein is Protein N-terminal and lysine N-methyltransferase EFM7 of Cryptococcus neoformans var. neoformans serotype D (strain JEC21 / ATCC MYA-565) (Filobasidiella neoformans).